A 540-amino-acid polypeptide reads, in one-letter code: Phosphoenolpyruvate carboxykinase (ATP) (540 aa).

Arg-65 lines the substrate pocket. N6-acetyllysine is present on Lys-87. Substrate is bound by residues Tyr-207 and Lys-213. ATP is bound by residues Lys-213, His-232, and 248–256 (GLSGTGKTT). Mn(2+) contacts are provided by Lys-213 and His-232. A Mn(2+)-binding site is contributed by Asp-269. ATP contacts are provided by residues Glu-297, Arg-333, 449-450 (RI), and Thr-455. Arg-333 provides a ligand contact to substrate. Lys-523 carries the N6-acetyllysine modification.

The protein belongs to the phosphoenolpyruvate carboxykinase (ATP) family. Monomer. Mn(2+) is required as a cofactor.

It localises to the cytoplasm. It catalyses the reaction oxaloacetate + ATP = phosphoenolpyruvate + ADP + CO2. Its pathway is carbohydrate biosynthesis; gluconeogenesis. Its function is as follows. Involved in the gluconeogenesis. Catalyzes the conversion of oxaloacetate (OAA) to phosphoenolpyruvate (PEP) through direct phosphoryl transfer between the nucleoside triphosphate and OAA. This chain is Phosphoenolpyruvate carboxykinase (ATP), found in Escherichia coli O157:H7.